A 276-amino-acid polypeptide reads, in one-letter code: N-acyl homoserine lactonase AiiB (276 aa).

Residues His-111, His-113, His-116, His-191, Asp-213, and His-259 each coordinate Zn(2+).

This sequence belongs to the metallo-beta-lactamase superfamily. Zn(2+) serves as cofactor.

It catalyses the reaction an N-acyl-L-homoserine lactone + H2O = an N-acyl-L-homoserine + H(+). This chain is N-acyl homoserine lactonase AiiB, found in Agrobacterium fabrum (strain C58 / ATCC 33970) (Agrobacterium tumefaciens (strain C58)).